The following is a 189-amino-acid chain: Threonylcarbamoyl-AMP synthase (189 aa).

The 183-residue stretch at 7-189 folds into the YrdC-like domain; that stretch reads NFTVKGLTEQ…DAITGKIIRK (183 aa).

Belongs to the SUA5 family. TsaC subfamily.

The protein resides in the cytoplasm. It catalyses the reaction L-threonine + hydrogencarbonate + ATP = L-threonylcarbamoyladenylate + diphosphate + H2O. In terms of biological role, required for the formation of a threonylcarbamoyl group on adenosine at position 37 (t(6)A37) in tRNAs that read codons beginning with adenine. Catalyzes the conversion of L-threonine, HCO(3)(-)/CO(2) and ATP to give threonylcarbamoyl-AMP (TC-AMP) as the acyladenylate intermediate, with the release of diphosphate. In Blochmanniella floridana, this protein is Threonylcarbamoyl-AMP synthase.